Here is a 217-residue protein sequence, read N- to C-terminus: GTP cyclohydrolase 1 (217 aa).

3 residues coordinate Zn(2+): Cys-109, His-112, and Cys-180.

Belongs to the GTP cyclohydrolase I family. As to quaternary structure, toroid-shaped homodecamer, composed of two pentamers of five dimers.

It carries out the reaction GTP + H2O = 7,8-dihydroneopterin 3'-triphosphate + formate + H(+). Its pathway is cofactor biosynthesis; 7,8-dihydroneopterin triphosphate biosynthesis; 7,8-dihydroneopterin triphosphate from GTP: step 1/1. The polypeptide is GTP cyclohydrolase 1 (Aliivibrio fischeri (strain ATCC 700601 / ES114) (Vibrio fischeri)).